A 110-amino-acid chain; its full sequence is Co-chaperonin GroES (110 aa).

It belongs to the GroES chaperonin family. Heptamer of 7 subunits arranged in a ring. Interacts with the chaperonin GroEL.

The protein resides in the cytoplasm. Its function is as follows. Together with the chaperonin GroEL, plays an essential role in assisting protein folding. The GroEL-GroES system forms a nano-cage that allows encapsulation of the non-native substrate proteins and provides a physical environment optimized to promote and accelerate protein folding. GroES binds to the apical surface of the GroEL ring, thereby capping the opening of the GroEL channel. The protein is Co-chaperonin GroES of Mycoplasma genitalium (strain ATCC 33530 / DSM 19775 / NCTC 10195 / G37) (Mycoplasmoides genitalium).